A 69-amino-acid chain; its full sequence is uncharacterized protein (69 aa).

This is an uncharacterized protein from Escherichia coli O157:H7.